A 504-amino-acid polypeptide reads, in one-letter code: Zinc finger CCCH domain-containing protein 18 (504 aa).

The stretch at 40–69 (SNADLLEVHEELLAAIKDAEEGLLHLKRSR) forms a coiled coil. Residues 77-105 (IFPNQEPTSEAPEVAVDPPDDVEPEPLEP) are disordered. Residues 94–104 (PPDDVEPEPLE) are compositionally biased toward acidic residues. The C3H1-type zinc finger occupies 146 to 173 (SENMSMCKFFLQQRCRFGSNCRLSHGIV). A disordered region spans residues 230 to 276 (GSSARLPSDSLSISEYADESDEDGEGSSSDEGSDFSEDGDQEDESVH). 2 stretches are compositionally biased toward acidic residues: residues 245 to 254 (YADESDEDGE) and 260 to 272 (EGSD…DQED). The G-patch domain maps to 304-350 (TRGVASKMMAKMGYREGMGLGVSGQGMLDPIPVKVLPPKQSLDHAVA). Disordered stretches follow at residues 351-390 (ASEV…EEER), 406-432 (AEGS…DRRS), and 482-504 (EATH…WLKF). The span at 361-374 (GKKRSRGGKRKREK) shows a compositional bias: basic residues. 3 stretches are compositionally biased toward basic and acidic residues: residues 375-390 (KFAE…EEER), 413-432 (SKKD…DRRS), and 493-504 (ARKEKEKKWLKF). A coiled-coil region spans residues 430-500 (RRSLLAYDDE…AVARKEKEKK (71 aa)).

The polypeptide is Zinc finger CCCH domain-containing protein 18 (Oryza sativa subsp. japonica (Rice)).